A 345-amino-acid chain; its full sequence is Achaete-scute complex protein T4 (345 aa).

The segment covering 78-92 (SESVSSLSPGSSPAP) has biased composition (low complexity). Residues 78–109 (SESVSSLSPGSSPAPYNVDQSQSVQRRNARER) are disordered. The bHLH domain occupies 99–162 (QSVQRRNARE…RIAVEYIRRL (64 aa)).

Efficient DNA binding requires dimerization with another bHLH protein. Interacts with da (via bHLH motif). Interacts with Bap60. As to expression, l(1)SC, SC and AC strongly label the presumptive stomatogastric nervous system, while ASE is more prominent in the presumptive procephalic lobe. Associates with the somatic nuclei through nuclear cycles 9 and 10. During nuclear cycle 11 distributes uniformly in the embryo.

In terms of biological role, AS-C proteins are involved in the determination of the neuronal precursors in the peripheral nervous system and the central nervous system. Also involved in sex determination and dosage compensation. The sequence is that of Achaete-scute complex protein T4 (sc) from Drosophila melanogaster (Fruit fly).